The following is a 292-amino-acid chain: 2-(5''-triphosphoribosyl)-3'-dephosphocoenzyme-A synthase (292 aa).

Belongs to the CitG/MdcB family.

It carries out the reaction 3'-dephospho-CoA + ATP = 2'-(5''-triphospho-alpha-D-ribosyl)-3'-dephospho-CoA + adenine. Its function is as follows. Catalyzes the formation of 2-(5''-triphosphoribosyl)-3'-dephosphocoenzyme-A, the precursor of the prosthetic group of the holo-acyl carrier protein (gamma chain) of citrate lyase, from ATP and dephospho-CoA. The chain is 2-(5''-triphosphoribosyl)-3'-dephosphocoenzyme-A synthase from Escherichia coli O6:K15:H31 (strain 536 / UPEC).